Here is a 117-residue protein sequence, read N- to C-terminus: Immunity protein BC_0921 (117 aa).

In terms of assembly, probably interacts with cognate toxin BC_0920 but not with other non-cognate toxins. The interaction inhibits the toxic activity of BC_0920.

It localises to the cytoplasm. In terms of biological role, immunity component of an LXG toxin-immunity module. Neutralizes the RNase activity of cognate toxin BC_0920. Probably does not have immunity protein activity on other toxins with the LXG domain. This chain is Immunity protein BC_0921, found in Bacillus cereus (strain ATCC 14579 / DSM 31 / CCUG 7414 / JCM 2152 / NBRC 15305 / NCIMB 9373 / NCTC 2599 / NRRL B-3711).